The sequence spans 245 residues: 1-(5-phosphoribosyl)-5-[(5-phosphoribosylamino)methylideneamino] imidazole-4-carboxamide isomerase (245 aa).

Aspartate 7 serves as the catalytic Proton acceptor. The active-site Proton donor is the aspartate 129.

Belongs to the HisA/HisF family.

The protein localises to the cytoplasm. The catalysed reaction is 1-(5-phospho-beta-D-ribosyl)-5-[(5-phospho-beta-D-ribosylamino)methylideneamino]imidazole-4-carboxamide = 5-[(5-phospho-1-deoxy-D-ribulos-1-ylimino)methylamino]-1-(5-phospho-beta-D-ribosyl)imidazole-4-carboxamide. It participates in amino-acid biosynthesis; L-histidine biosynthesis; L-histidine from 5-phospho-alpha-D-ribose 1-diphosphate: step 4/9. The sequence is that of 1-(5-phosphoribosyl)-5-[(5-phosphoribosylamino)methylideneamino] imidazole-4-carboxamide isomerase from Alteromonas mediterranea (strain DSM 17117 / CIP 110805 / LMG 28347 / Deep ecotype).